Here is a 158-residue protein sequence, read N- to C-terminus: Regulator of sigma D (158 aa).

It belongs to the Rsd/AlgQ family. Interacts with RpoD.

The protein resides in the cytoplasm. In terms of biological role, binds RpoD and negatively regulates RpoD-mediated transcription activation by preventing the interaction between the primary sigma factor RpoD with the catalytic core of the RNA polymerase and with promoter DNA. May be involved in replacement of the RNA polymerase sigma subunit from RpoD to RpoS during the transition from exponential growth to the stationary phase. The sequence is that of Regulator of sigma D from Escherichia coli O127:H6 (strain E2348/69 / EPEC).